We begin with the raw amino-acid sequence, 420 residues long: Homeobox-containing protein 1 (420 aa).

The HNF-p1 domain occupies 18–49 (DEPRFTIEQIDLLQRLRRTGMTKHEILHALET). The interval 56–139 (EHSDKFGRRS…GKMSPTRYHA (84 aa)) is disordered. K60 participates in a covalent cross-link: Glycyl lysine isopeptide (Lys-Gly) (interchain with G-Cter in SUMO2). Low complexity-rich tracts occupy residues 64-73 (RSSYGGSSYG) and 81-93 (ASSS…TQTQ). Positions 94 to 132 (HSGMSPSPSNSYDTSPQPCTTNQNGRENNERLSTSNGKM) are enriched in polar residues. K131 is covalently cross-linked (Glycyl lysine isopeptide (Lys-Gly) (interchain with G-Cter in SUMO2)). The POU-specific atypical domain occupies 145–241 (RSYSFEASEE…PGATLSMRPA (97 aa)). S148 carries the post-translational modification Phosphoserine. Residue K161 forms a Glycyl lysine isopeptide (Lys-Gly) (interchain with G-Cter in SUMO2) linkage. Position 170 is a phosphoserine (S170). Glycyl lysine isopeptide (Lys-Gly) (interchain with G-Cter in SUMO2) cross-links involve residues K174, K217, and K310. The homeobox DNA-binding region spans 267–341 (RRGSRFTWRK…NRRKEIKRRA (75 aa)). Residues 353–385 (IDVQSPGGHSNSDDVDGNDYSEQDDSTSHSDHQ) form a disordered region. A compositionally biased stretch (acidic residues) spans 365–377 (DDVDGNDYSEQDD). K413 is covalently cross-linked (Glycyl lysine isopeptide (Lys-Gly) (interchain with G-Cter in SUMO1); alternate). K413 participates in a covalent cross-link: Glycyl lysine isopeptide (Lys-Gly) (interchain with G-Cter in SUMO2); alternate.

In terms of assembly, associates with the telomerase holoenzyme complex. Interacts with DKC1, XRCC6 and COIL. As to expression, ubiquitous. Detected in pancreas, brain, spleen, placenta, prostate, thymus, liver, heart, bone marrow, skeletal muscle, stomach, uterus, testis, kidney, ovary, colon, lung, cardiac muscle and thyroid gland.

It is found in the nucleus. The protein resides in the cytoplasm. Its subcellular location is the chromosome. The protein localises to the telomere. It localises to the cajal body. It is found in the PML body. Binds directly to 5'-TTAGGG-3' repeats in telomeric DNA. Associates with the telomerase complex at sites of active telomere processing and positively regulates telomere elongation. Important for TERT binding to chromatin, indicating a role in recruitment of the telomerase complex to telomeres. Also plays a role in the alternative lengthening of telomeres (ALT) pathway in telomerase-negative cells where it promotes formation and/or maintenance of ALT-associated promyelocytic leukemia bodies (APBs). Enhances formation of telomere C-circles in ALT cells, suggesting a possible role in telomere recombination. Might also be involved in the DNA damage response at telomeres. In Homo sapiens (Human), this protein is Homeobox-containing protein 1.